We begin with the raw amino-acid sequence, 206 residues long: Probable thymidylate kinase (206 aa).

An ATP-binding site is contributed by 10–17 (GIDGSGKS).

Belongs to the thymidylate kinase family.

The enzyme catalyses dTMP + ATP = dTDP + ADP. The polypeptide is Probable thymidylate kinase (Methanosarcina acetivorans (strain ATCC 35395 / DSM 2834 / JCM 12185 / C2A)).